The sequence spans 358 residues: MRPLVATVDLSAIRHNYALAKRCAPQRQAFAVVKANAYGHGAREVVTALHDDADGFAVACLEEAAEVRALHASARILLLEGCFEASEYALAGQLRLDLVIQGAEQGEAFLAAGLDIPLNVWLKLDSGMHRLGFDPAALRAWHARLRSHPGVRELNLISHFACADERNHPLTEQQLESFLGLLDLDFDQRSLANSAAVLTIPAAHMDWLRPGIMLYGSTPLADLSAAELGLKPAMSLGAQLISLREVAVGESVGYGATWIAERPARIGTVSCGYADGYPRTAPAGTPVLVGGRRAILAGRVSMDMLAVDLSDLPEARVGDPVELWGAGLSVDEVARACGTLGYELLSKVTARVPRRYSH.

Lysine 34 (proton acceptor; specific for D-alanine) is an active-site residue. Lysine 34 is subject to N6-(pyridoxal phosphate)lysine. Arginine 130 contributes to the substrate binding site. Tyrosine 254 (proton acceptor; specific for L-alanine) is an active-site residue. Residue methionine 302 participates in substrate binding.

The protein belongs to the alanine racemase family. The cofactor is pyridoxal 5'-phosphate.

It catalyses the reaction L-alanine = D-alanine. The protein operates within amino-acid biosynthesis; D-alanine biosynthesis; D-alanine from L-alanine: step 1/1. It participates in cell wall biogenesis; peptidoglycan biosynthesis. Functionally, catalyzes the interconversion of L-alanine and D-alanine. Provides the D-alanine required for cell wall biosynthesis. This Pseudomonas aeruginosa (strain ATCC 15692 / DSM 22644 / CIP 104116 / JCM 14847 / LMG 12228 / 1C / PRS 101 / PAO1) protein is Alanine racemase, biosynthetic (alr).